The chain runs to 237 residues: Phosphoribosylaminoimidazole-succinocarboxamide synthase (237 aa).

It belongs to the SAICAR synthetase family.

It catalyses the reaction 5-amino-1-(5-phospho-D-ribosyl)imidazole-4-carboxylate + L-aspartate + ATP = (2S)-2-[5-amino-1-(5-phospho-beta-D-ribosyl)imidazole-4-carboxamido]succinate + ADP + phosphate + 2 H(+). The protein operates within purine metabolism; IMP biosynthesis via de novo pathway; 5-amino-1-(5-phospho-D-ribosyl)imidazole-4-carboxamide from 5-amino-1-(5-phospho-D-ribosyl)imidazole-4-carboxylate: step 1/2. This is Phosphoribosylaminoimidazole-succinocarboxamide synthase from Shigella dysenteriae serotype 1 (strain Sd197).